We begin with the raw amino-acid sequence, 555 residues long: Disabled homolog 1 (555 aa).

A disordered region spans residues 1 to 26 (MSTETELQVAVKTSAKKDSRKKGQDR). Basic and acidic residues predominate over residues 15 to 26 (AKKDSRKKGQDR). Residues 36-189 (KGEGVRYKAK…CEQAVYQTIL (154 aa)) form the PID domain. Tyr198, Tyr220, and Tyr232 each carry phosphotyrosine. Disordered regions lie at residues 384-410 (LTPL…RQKM), 418-437 (FQMA…PSLT), and 468-555 (NLTP…QAGS). Residues 391–403 (PGTSDSTRPSPQT) are compositionally biased toward polar residues. Composition is skewed to low complexity over residues 470–479 (TPVTSTTPST) and 487–501 (PRQS…SHAS). Ser491 bears the Phosphoserine; by CDK5 mark. Residues 504 to 513 (TTDDIFEEGF) show a composition bias toward acidic residues.

In terms of assembly, associates with the SH2 domains of SRC, FYN and ABL. Interacts (phosphorylated on tyrosine residues) with CRK and CRKL (via respective SH2 domain). Interacts with DAB2IP, SIAH1, LRP8 and VLDLR. Interacts with LRP1. Interacts with APLP1 (via NPXY motif). Interacts with DAB2IP. Interacts with ZSWIM8. In terms of processing, phosphorylated by FYN on Tyr-198 and Tyr-220 upon reelin induction in embryonic neurons. Also phosphorylated on Ser-491 independently of reelin signaling. Ubiquitinated by various cullin-5-RING E3 ubiquitin-protein ligase complexes (ECS complexes) following ligand-binding and phosphorylation, leading to its degradation. Ubiquitinated by the ECS(SOCS7) complex in the cortical plate of the developing cerebral cortex following ligand-binding and phosphorylation by FYN, leading to its degradation by the proteasome. Recognized by ZSWIM8 through a disorder targets misorder mechanism that eliminates misfolded DAB1 via ubiquitination and proteasomal degradation.

The protein resides in the cytoplasm. In terms of biological role, signaling adapter of the reelin-mediated signaling pathway, which regulates the migration and differentiation of postmitotic neurons during brain development. Mediates intracellular transduction of Reelin signaling following reelin (RELN)-binding to its receptor: acts by docking proteins through its phosphotyrosine residues and PID domain. This Macaca fascicularis (Crab-eating macaque) protein is Disabled homolog 1 (DAB1).